We begin with the raw amino-acid sequence, 62 residues long: Large ribosomal subunit protein eL24 (62 aa).

Zn(2+) contacts are provided by Cys-6, Cys-9, Cys-32, and Cys-36. The C4-type zinc finger occupies 6 to 36 (CYFCGQMLEPGTGKLYIKKDGSTYFMCSSKC).

It belongs to the eukaryotic ribosomal protein eL24 family. As to quaternary structure, part of the 50S ribosomal subunit. Forms a cluster with proteins L3 and L14. Zn(2+) is required as a cofactor.

Functionally, binds to the 23S rRNA. This chain is Large ribosomal subunit protein eL24, found in Methanosarcina mazei (strain ATCC BAA-159 / DSM 3647 / Goe1 / Go1 / JCM 11833 / OCM 88) (Methanosarcina frisia).